Consider the following 243-residue polypeptide: MPNIRLDVEYDGTSFAGWQRQPNGIVTVQGEIEAVLSEILQEKINLAAAGRTDRGVHARGQVVNFSTRSPLEHSRIRHSLNCLLPSSICIPSSQLVPDDFHARFSALERQYRYFAIPEPSALMGRYTGCSHGDVDFALMQHLSSGLRGTHDFSLFSREDRDGNGSLCTVREAGWYRHKGVMVFHIAANRFLRSMVRGIVGGMLSAGRGELDPEEYLGMLGGGGGGMRVKPAVASGLFLWRVRY.

Aspartate 53 serves as the catalytic Nucleophile. Tyrosine 111 serves as a coordination point for substrate.

Belongs to the tRNA pseudouridine synthase TruA family. Homodimer.

It catalyses the reaction uridine(38/39/40) in tRNA = pseudouridine(38/39/40) in tRNA. In terms of biological role, formation of pseudouridine at positions 38, 39 and 40 in the anticodon stem and loop of transfer RNAs. The chain is tRNA pseudouridine synthase A from Chlorobium phaeovibrioides (strain DSM 265 / 1930) (Prosthecochloris vibrioformis (strain DSM 265)).